The primary structure comprises 324 residues: Olfactory receptor 7G2 (324 aa).

The Extracellular portion of the chain corresponds to 1–25; it reads MEARNQTAISKFLLLGLIEDPELQP. N5 carries an N-linked (GlcNAc...) asparagine glycan. A helical transmembrane segment spans residues 26–46; it reads VLFSLFLSMYLVTILGNLLIL. Topologically, residues 47 to 54 are cytoplasmic; it reads LAVISDSH. The helical transmembrane segment at 55 to 75 threads the bilayer; that stretch reads LHTPMYFFLSNLSFLDICLST. The Extracellular portion of the chain corresponds to 76–99; that stretch reads TTIPKMLVNIQAQNRSITYSGCLT. N89 carries N-linked (GlcNAc...) asparagine glycosylation. Cysteines 97 and 189 form a disulfide. A helical membrane pass occupies residues 100–120; it reads QICFVLFFAGLENCLLAAMAY. Residues 121 to 139 are Cytoplasmic-facing; that stretch reads DRYVAICHPLRYTVIMNPR. A helical membrane pass occupies residues 140 to 160; the sequence is LCGLLILLSLLTSVVNALLLS. The Extracellular portion of the chain corresponds to 161 to 197; sequence LMVLRLSFCTDLEIPLFFCELAQVIQLTCSDTLINNI. A helical membrane pass occupies residues 198–217; the sequence is LIYFAACIFGGVPLSGIILS. The Cytoplasmic segment spans residues 218-237; sequence YTQITSCVLRMPSASGKHKA. A helical transmembrane segment spans residues 238-258; sequence VSTCGSHLSIVLLFYGAGLGV. Residues 259–271 lie on the Extracellular side of the membrane; sequence YISSVVTDSPRKT. The chain crosses the membrane as a helical span at residues 272-292; it reads AVASVMYSVFPQMVNPFIYSL. Topologically, residues 293–324 are cytoplasmic; that stretch reads RNKDMKGTLRKFIGRIPSLLWCAICFGFRFLE.

This sequence belongs to the G-protein coupled receptor 1 family.

It is found in the cell membrane. Functionally, odorant receptor. This is Olfactory receptor 7G2 (OR7G2) from Homo sapiens (Human).